Here is a 161-residue protein sequence, read N- to C-terminus: SsrA-binding protein (161 aa).

The protein belongs to the SmpB family.

Its subcellular location is the cytoplasm. Functionally, required for rescue of stalled ribosomes mediated by trans-translation. Binds to transfer-messenger RNA (tmRNA), required for stable association of tmRNA with ribosomes. tmRNA and SmpB together mimic tRNA shape, replacing the anticodon stem-loop with SmpB. tmRNA is encoded by the ssrA gene; the 2 termini fold to resemble tRNA(Ala) and it encodes a 'tag peptide', a short internal open reading frame. During trans-translation Ala-aminoacylated tmRNA acts like a tRNA, entering the A-site of stalled ribosomes, displacing the stalled mRNA. The ribosome then switches to translate the ORF on the tmRNA; the nascent peptide is terminated with the 'tag peptide' encoded by the tmRNA and targeted for degradation. The ribosome is freed to recommence translation, which seems to be the essential function of trans-translation. The sequence is that of SsrA-binding protein from Vibrio campbellii (strain ATCC BAA-1116).